The chain runs to 259 residues: Leucine-rich repeat-containing protein 61 (259 aa).

LRR repeat units follow at residues 54-75, 76-97, and 98-119; these read NLEW…ASLR, QLAV…AACE, and NLQS…QCLA. The LRRCT domain maps to 138–178; the sequence is NPLCANASYWAVVRELLPGLKVIDGERVSGRGSELYQLCRD.

This Mus musculus (Mouse) protein is Leucine-rich repeat-containing protein 61 (Lrrc61).